A 333-amino-acid chain; its full sequence is uncharacterized protein (333 aa).

In terms of domain architecture, Radical SAM core spans 67–274; that stretch reads HFYPTTQVVS…LEMARNLAIE (208 aa). Cys-82, Cys-86, and Cys-89 together coordinate [4Fe-4S] cluster.

The cofactor is [4Fe-4S] cluster.

This is an uncharacterized protein from Methanocaldococcus jannaschii (strain ATCC 43067 / DSM 2661 / JAL-1 / JCM 10045 / NBRC 100440) (Methanococcus jannaschii).